A 419-amino-acid chain; its full sequence is uncharacterized protein (419 aa).

The [4Fe-4S] cluster site is built by cysteine 38, cysteine 44, cysteine 47, and cysteine 126. Positions 250, 280, 301, and 346 each coordinate S-adenosyl-L-methionine. Cysteine 373 acts as the Nucleophile in catalysis.

The protein belongs to the class I-like SAM-binding methyltransferase superfamily. RNA M5U methyltransferase family.

This is an uncharacterized protein from Prochlorococcus marinus (strain SARG / CCMP1375 / SS120).